The sequence spans 374 residues: Bifunctional enzyme IspD/IspF (374 aa).

Residues 1 to 213 are 2-C-methyl-D-erythritol 4-phosphate cytidylyltransferase; sequence MLDVTLIVLC…PCLKAPSNNF (213 aa). The tract at residues 214–374 is 2-C-methyl-D-erythritol 2,4-cyclodiphosphate synthase; it reads FTGTGFDIHA…TLKYYNWKKR (161 aa). Residues aspartate 220 and histidine 222 each coordinate a divalent metal cation. 4-CDP-2-C-methyl-D-erythritol 2-phosphate is bound by residues 220–222 and 246–247; these read DIH and HS. A divalent metal cation is bound at residue histidine 254. Residues 268–270, 273–277, 344–347, phenylalanine 351, and arginine 354 contribute to the 4-CDP-2-C-methyl-D-erythritol 2-phosphate site; these read DIG, FPDTD, and TTAE.

It in the N-terminal section; belongs to the IspD/TarI cytidylyltransferase family. IspD subfamily. The protein in the C-terminal section; belongs to the IspF family. It depends on a divalent metal cation as a cofactor.

It catalyses the reaction 2-C-methyl-D-erythritol 4-phosphate + CTP + H(+) = 4-CDP-2-C-methyl-D-erythritol + diphosphate. The enzyme catalyses 4-CDP-2-C-methyl-D-erythritol 2-phosphate = 2-C-methyl-D-erythritol 2,4-cyclic diphosphate + CMP. It participates in isoprenoid biosynthesis; isopentenyl diphosphate biosynthesis via DXP pathway; isopentenyl diphosphate from 1-deoxy-D-xylulose 5-phosphate: step 2/6. The protein operates within isoprenoid biosynthesis; isopentenyl diphosphate biosynthesis via DXP pathway; isopentenyl diphosphate from 1-deoxy-D-xylulose 5-phosphate: step 4/6. In terms of biological role, bifunctional enzyme that catalyzes the formation of 4-diphosphocytidyl-2-C-methyl-D-erythritol from CTP and 2-C-methyl-D-erythritol 4-phosphate (MEP) (IspD), and catalyzes the conversion of 4-diphosphocytidyl-2-C-methyl-D-erythritol 2-phosphate (CDP-ME2P) to 2-C-methyl-D-erythritol 2,4-cyclodiphosphate (ME-CPP) with a corresponding release of cytidine 5-monophosphate (CMP) (IspF). This Aliarcobacter butzleri (strain RM4018) (Arcobacter butzleri) protein is Bifunctional enzyme IspD/IspF.